Consider the following 381-residue polypeptide: p55-v-Fos-transforming protein (381 aa).

The bZIP domain maps to 137 to 200 (EEKRRIRRER…EKLEFILAAH (64 aa)). The tract at residues 139–159 (KRRIRRERNKMAAAKCRNRRR) is basic motif. The interval 165-193 (LQAETDQLEDKKSALQTEIANLLKEKEKL) is leucine-zipper.

Belongs to the bZIP family. Fos subfamily.

Its subcellular location is the host nucleus. The polypeptide is p55-v-Fos-transforming protein (V-FOS) (Mus musculus (Mouse)).